We begin with the raw amino-acid sequence, 471 residues long: Glutamate--tRNA ligase 1 (471 aa).

The 'HIGH' region signature appears at 15 to 25 (PSPTGYLHIGG). The 'KMSKS' region motif lies at 243–247 (KLSKR). Lys246 lines the ATP pocket.

It belongs to the class-I aminoacyl-tRNA synthetase family. Glutamate--tRNA ligase type 1 subfamily. In terms of assembly, monomer.

The protein localises to the cytoplasm. The catalysed reaction is tRNA(Glu) + L-glutamate + ATP = L-glutamyl-tRNA(Glu) + AMP + diphosphate. Catalyzes the attachment of glutamate to tRNA(Glu) in a two-step reaction: glutamate is first activated by ATP to form Glu-AMP and then transferred to the acceptor end of tRNA(Glu). The polypeptide is Glutamate--tRNA ligase 1 (Cereibacter sphaeroides (strain ATCC 17023 / DSM 158 / JCM 6121 / CCUG 31486 / LMG 2827 / NBRC 12203 / NCIMB 8253 / ATH 2.4.1.) (Rhodobacter sphaeroides)).